A 283-amino-acid chain; its full sequence is Bifunctional protein FolD (283 aa).

NADP(+) is bound by residues 165–167 (GRS) and S190.

This sequence belongs to the tetrahydrofolate dehydrogenase/cyclohydrolase family. Homodimer.

The enzyme catalyses (6R)-5,10-methylene-5,6,7,8-tetrahydrofolate + NADP(+) = (6R)-5,10-methenyltetrahydrofolate + NADPH. The catalysed reaction is (6R)-5,10-methenyltetrahydrofolate + H2O = (6R)-10-formyltetrahydrofolate + H(+). It functions in the pathway one-carbon metabolism; tetrahydrofolate interconversion. Catalyzes the oxidation of 5,10-methylenetetrahydrofolate to 5,10-methenyltetrahydrofolate and then the hydrolysis of 5,10-methenyltetrahydrofolate to 10-formyltetrahydrofolate. The polypeptide is Bifunctional protein FolD (Methylibium petroleiphilum (strain ATCC BAA-1232 / LMG 22953 / PM1)).